The sequence spans 317 residues: Aspartate carbamoyltransferase catalytic subunit (317 aa).

Residues Arg66 and Thr67 each coordinate carbamoyl phosphate. Position 94 (Lys94) interacts with L-aspartate. Carbamoyl phosphate is bound by residues Arg116, His144, and Gln147. Arg177 and Arg231 together coordinate L-aspartate. The carbamoyl phosphate site is built by Gly272 and Pro273.

This sequence belongs to the aspartate/ornithine carbamoyltransferase superfamily. ATCase family. As to quaternary structure, heterododecamer (2C3:3R2) of six catalytic PyrB chains organized as two trimers (C3), and six regulatory PyrI chains organized as three dimers (R2).

The catalysed reaction is carbamoyl phosphate + L-aspartate = N-carbamoyl-L-aspartate + phosphate + H(+). It functions in the pathway pyrimidine metabolism; UMP biosynthesis via de novo pathway; (S)-dihydroorotate from bicarbonate: step 2/3. Catalyzes the condensation of carbamoyl phosphate and aspartate to form carbamoyl aspartate and inorganic phosphate, the committed step in the de novo pyrimidine nucleotide biosynthesis pathway. The polypeptide is Aspartate carbamoyltransferase catalytic subunit (Rhodopseudomonas palustris (strain BisB5)).